Here is a 391-residue protein sequence, read N- to C-terminus: 8-amino-7-oxononanoate synthase (391 aa).

Arg-20 lines the substrate pocket. Position 106–107 (Gly-106–Tyr-107) interacts with pyridoxal 5'-phosphate. Residue His-131 participates in substrate binding. Residues Ser-178, His-206, and Thr-234 each contribute to the pyridoxal 5'-phosphate site. An N6-(pyridoxal phosphate)lysine modification is found at Lys-237. Residue Thr-353 coordinates substrate.

This sequence belongs to the class-II pyridoxal-phosphate-dependent aminotransferase family. BioF subfamily. Homodimer. Requires pyridoxal 5'-phosphate as cofactor.

The catalysed reaction is 6-carboxyhexanoyl-[ACP] + L-alanine + H(+) = (8S)-8-amino-7-oxononanoate + holo-[ACP] + CO2. It functions in the pathway cofactor biosynthesis; biotin biosynthesis. Its function is as follows. Catalyzes the decarboxylative condensation of pimeloyl-[acyl-carrier protein] and L-alanine to produce 8-amino-7-oxononanoate (AON), [acyl-carrier protein], and carbon dioxide. This is 8-amino-7-oxononanoate synthase from Trichlorobacter lovleyi (strain ATCC BAA-1151 / DSM 17278 / SZ) (Geobacter lovleyi).